The following is a 303-amino-acid chain: Deoxyhypusine hydroxylase (303 aa).

Position 1 is an N-acetylmethionine (methionine 1). HEAT-like PBS-type repeat units follow at residues 23–49 (ARFR…AFDD), 54–80 (LKHE…VLRD), 87–113 (VRHE…YSTD), 175–201 (DRYR…GLRC), 206–232 (FRHE…ALAQ), and 239–265 (VRHE…HVAD). Fe cation contacts are provided by histidine 56, histidine 89, and glutamate 90. Histidine 208, histidine 241, and glutamate 242 together coordinate Fe cation.

This sequence belongs to the deoxyhypusine hydroxylase family. It depends on Fe(2+) as a cofactor.

It carries out the reaction [eIF5A protein]-deoxyhypusine + AH2 + O2 = [eIF5A protein]-hypusine + A + H2O. It participates in protein modification; eIF5A hypusination. In terms of biological role, catalyzes the hydroxylation of the N(6)-(4-aminobutyl)-L-lysine intermediate produced by deoxyhypusine synthase/DHPS on a critical lysine of the eukaryotic translation initiation factor 5A/eIF-5A. This is the second step of the post-translational modification of that lysine into an unusual amino acid residue named hypusine. Hypusination is unique to mature eIF-5A factor and is essential for its function. The polypeptide is Deoxyhypusine hydroxylase (Bos taurus (Bovine)).